The chain runs to 142 residues: Lysozyme 2 (142 aa).

The first 20 residues, 1-20, serve as a signal peptide directing secretion; the sequence is MLKLTLTILAAVLLVTPAFG. One can recognise a C-type lysozyme domain in the interval 21 to 142; the sequence is KVYTRCSLAR…HTLPSIDDCF (122 aa). Disulfide bonds link cysteine 26–cysteine 141, cysteine 47–cysteine 131, cysteine 82–cysteine 98, and cysteine 94–cysteine 112. Residue glutamate 52 is part of the active site. An N-linked (GlcNAc...) asparagine glycan is attached at asparagine 66. Aspartate 70 is an active-site residue.

This sequence belongs to the glycosyl hydrolase 22 family. As to expression, expressed only in the midgut where it is concentrated around the middle in all larval stages.

It is found in the secreted. The enzyme catalyses Hydrolysis of (1-&gt;4)-beta-linkages between N-acetylmuramic acid and N-acetyl-D-glucosamine residues in a peptidoglycan and between N-acetyl-D-glucosamine residues in chitodextrins.. In terms of biological role, lysozymes have primarily a bacteriolytic function. Shows antibacterial activity against Gram-positive bacterium M.luteus but shows no activity against Gram-negative bacterium E.coli. Likely to play a role in the eradication of ingested pathogens during their passage through the intestine. This Lucilia sericata (Green bottle fly) protein is Lysozyme 2.